The chain runs to 70 residues: Small, acid-soluble spore protein alpha (70 aa).

Belongs to the alpha/beta-type SASP family.

Its function is as follows. SASP are bound to spore DNA. They are double-stranded DNA-binding proteins that cause DNA to change to an a-like conformation. They protect the DNA backbone from chemical and enzymatic cleavage and are thus involved in dormant spore's high resistance to UV light. This is Small, acid-soluble spore protein alpha from Paraclostridium bifermentans (Clostridium bifermentans).